The primary structure comprises 352 residues: Strictosidine synthase (352 aa).

The first 31 residues, 1–31 (MANFSESKSMMAVFFMFFLLLLSSSSSSSSS), serve as a signal peptide directing secretion. N95 and N187 each carry an N-linked (GlcNAc...) asparagine glycan.

The protein belongs to the strictosidine synthase family. In terms of assembly, monomer.

Its subcellular location is the vacuole. The enzyme catalyses 3alpha(S)-strictosidine + H2O = secologanin + tryptamine. It functions in the pathway alkaloid biosynthesis; 3alpha(S)-strictosidine biosynthesis; 3alpha(S)-strictosidine from secologanin and tryptamine: step 1/1. Functionally, catalyzes the stereospecific condensation of tryptamine with secologanin to form strictosidine, the key intermediate of indole alkaloid biosynthesis. The sequence is that of Strictosidine synthase (STR1) from Catharanthus roseus (Madagascar periwinkle).